We begin with the raw amino-acid sequence, 363 residues long: DNA replication and repair protein RecF (363 aa).

33–40 (GDNGQGKT) is an ATP binding site.

It belongs to the RecF family.

The protein resides in the cytoplasm. In terms of biological role, the RecF protein is involved in DNA metabolism; it is required for DNA replication and normal SOS inducibility. RecF binds preferentially to single-stranded, linear DNA. It also seems to bind ATP. This is DNA replication and repair protein RecF from Tropheryma whipplei (strain TW08/27) (Whipple's bacillus).